The primary structure comprises 394 residues: NAD(P)H-quinone oxidoreductase subunit H (394 aa).

This sequence belongs to the complex I 49 kDa subunit family. In terms of assembly, NDH-1 can be composed of about 15 different subunits; different subcomplexes with different compositions have been identified which probably have different functions.

It is found in the cellular thylakoid membrane. It catalyses the reaction a plastoquinone + NADH + (n+1) H(+)(in) = a plastoquinol + NAD(+) + n H(+)(out). The catalysed reaction is a plastoquinone + NADPH + (n+1) H(+)(in) = a plastoquinol + NADP(+) + n H(+)(out). Functionally, NDH-1 shuttles electrons from an unknown electron donor, via FMN and iron-sulfur (Fe-S) centers, to quinones in the respiratory and/or the photosynthetic chain. The immediate electron acceptor for the enzyme in this species is believed to be plastoquinone. Couples the redox reaction to proton translocation, and thus conserves the redox energy in a proton gradient. Cyanobacterial NDH-1 also plays a role in inorganic carbon-concentration. The protein is NAD(P)H-quinone oxidoreductase subunit H of Trichormus variabilis (strain ATCC 29413 / PCC 7937) (Anabaena variabilis).